The following is a 342-amino-acid chain: Phenylalanine--tRNA ligase alpha subunit (342 aa).

Glu257 lines the Mg(2+) pocket.

It belongs to the class-II aminoacyl-tRNA synthetase family. Phe-tRNA synthetase alpha subunit type 1 subfamily. In terms of assembly, tetramer of two alpha and two beta subunits. Mg(2+) is required as a cofactor.

It localises to the cytoplasm. It carries out the reaction tRNA(Phe) + L-phenylalanine + ATP = L-phenylalanyl-tRNA(Phe) + AMP + diphosphate + H(+). The protein is Phenylalanine--tRNA ligase alpha subunit of Chlamydia trachomatis serovar A (strain ATCC VR-571B / DSM 19440 / HAR-13).